Reading from the N-terminus, the 292-residue chain is Homoserine kinase (292 aa).

Residue 80 to 90 (PLARGLGSSSS) coordinates ATP.

The protein belongs to the GHMP kinase family. Homoserine kinase subfamily.

The protein localises to the cytoplasm. It catalyses the reaction L-homoserine + ATP = O-phospho-L-homoserine + ADP + H(+). It functions in the pathway amino-acid biosynthesis; L-threonine biosynthesis; L-threonine from L-aspartate: step 4/5. In terms of biological role, catalyzes the ATP-dependent phosphorylation of L-homoserine to L-homoserine phosphate. The polypeptide is Homoserine kinase (Leuconostoc mesenteroides subsp. mesenteroides (strain ATCC 8293 / DSM 20343 / BCRC 11652 / CCM 1803 / JCM 6124 / NCDO 523 / NBRC 100496 / NCIMB 8023 / NCTC 12954 / NRRL B-1118 / 37Y)).